Consider the following 333-residue polypeptide: tRNA(Ile)-lysidine synthase (333 aa).

25–30 (SGGPDS) is an ATP binding site.

It belongs to the tRNA(Ile)-lysidine synthase family.

Its subcellular location is the cytoplasm. It carries out the reaction cytidine(34) in tRNA(Ile2) + L-lysine + ATP = lysidine(34) in tRNA(Ile2) + AMP + diphosphate + H(+). In terms of biological role, ligates lysine onto the cytidine present at position 34 of the AUA codon-specific tRNA(Ile) that contains the anticodon CAU, in an ATP-dependent manner. Cytidine is converted to lysidine, thus changing the amino acid specificity of the tRNA from methionine to isoleucine. The polypeptide is tRNA(Ile)-lysidine synthase (Ureaplasma parvum serovar 3 (strain ATCC 700970)).